Reading from the N-terminus, the 492-residue chain is N-succinylglutamate 5-semialdehyde dehydrogenase (492 aa).

Position 220–225 (220–225 (GSASTG)) interacts with NAD(+). Residues E243 and C277 contribute to the active site.

The protein belongs to the aldehyde dehydrogenase family. AstD subfamily.

The enzyme catalyses N-succinyl-L-glutamate 5-semialdehyde + NAD(+) + H2O = N-succinyl-L-glutamate + NADH + 2 H(+). It functions in the pathway amino-acid degradation; L-arginine degradation via AST pathway; L-glutamate and succinate from L-arginine: step 4/5. Catalyzes the NAD-dependent reduction of succinylglutamate semialdehyde into succinylglutamate. This is N-succinylglutamate 5-semialdehyde dehydrogenase from Salmonella heidelberg (strain SL476).